We begin with the raw amino-acid sequence, 357 residues long: Probable butyrate kinase 1 (357 aa).

Belongs to the acetokinase family.

It localises to the cytoplasm. It carries out the reaction butanoate + ATP = butanoyl phosphate + ADP. The protein is Probable butyrate kinase 1 of Thermotoga maritima (strain ATCC 43589 / DSM 3109 / JCM 10099 / NBRC 100826 / MSB8).